The following is a 666-amino-acid chain: Probable potassium transport system protein Kup (666 aa).

12 helical membrane-spanning segments follow: residues 16-36 (GFII…LYTM), 58-78 (ISLI…LIAL), 100-120 (PWLI…GALT), 141-161 (IYQN…VLFG), 165-185 (FGTG…FSFL), 221-241 (IFIL…YSDL), 253-273 (WPFV…WILA), 294-314 (VYLV…LISG), 343-363 (LYIP…VLAF), 373-393 (YGLA…YYLI), 399-419 (PILA…FFLA), and 424-444 (FMHG…VMFI).

The protein belongs to the HAK/KUP transporter (TC 2.A.72) family.

The protein resides in the cell membrane. The enzyme catalyses K(+)(in) + H(+)(in) = K(+)(out) + H(+)(out). In terms of biological role, transport of potassium into the cell. Likely operates as a K(+):H(+) symporter. The protein is Probable potassium transport system protein Kup of Streptococcus pyogenes serotype M4 (strain MGAS10750).